The chain runs to 451 residues: UDP-N-acetylmuramoylalanine--D-glutamate ligase (451 aa).

An ATP-binding site is contributed by 120-126; that stretch reads GSNGKTT.

It belongs to the MurCDEF family.

The protein localises to the cytoplasm. It catalyses the reaction UDP-N-acetyl-alpha-D-muramoyl-L-alanine + D-glutamate + ATP = UDP-N-acetyl-alpha-D-muramoyl-L-alanyl-D-glutamate + ADP + phosphate + H(+). It participates in cell wall biogenesis; peptidoglycan biosynthesis. Functionally, cell wall formation. Catalyzes the addition of glutamate to the nucleotide precursor UDP-N-acetylmuramoyl-L-alanine (UMA). The polypeptide is UDP-N-acetylmuramoylalanine--D-glutamate ligase (Bacillus pumilus (strain SAFR-032)).